The primary structure comprises 433 residues: 3-phosphoshikimate 1-carboxyvinyltransferase (433 aa).

Positions 21, 22, and 26 each coordinate 3-phosphoshikimate. Residue Lys21 coordinates phosphoenolpyruvate. Phosphoenolpyruvate contacts are provided by Gly96 and Arg124. Residues Ser167, Ser168, Gln169, Ser195, Asp310, and Lys337 each contribute to the 3-phosphoshikimate site. Gln169 is a phosphoenolpyruvate binding site. Catalysis depends on Asp310, which acts as the Proton acceptor. Positions 341, 384, and 410 each coordinate phosphoenolpyruvate.

This sequence belongs to the EPSP synthase family. In terms of assembly, monomer.

The protein localises to the cytoplasm. It catalyses the reaction 3-phosphoshikimate + phosphoenolpyruvate = 5-O-(1-carboxyvinyl)-3-phosphoshikimate + phosphate. Its pathway is metabolic intermediate biosynthesis; chorismate biosynthesis; chorismate from D-erythrose 4-phosphate and phosphoenolpyruvate: step 6/7. Catalyzes the transfer of the enolpyruvyl moiety of phosphoenolpyruvate (PEP) to the 5-hydroxyl of shikimate-3-phosphate (S3P) to produce enolpyruvyl shikimate-3-phosphate and inorganic phosphate. The protein is 3-phosphoshikimate 1-carboxyvinyltransferase of Clostridium botulinum (strain Eklund 17B / Type B).